The sequence spans 135 residues: MKAFSPVRSVRKSSLTEHSLGIARSKAPVDEPMSLLYNMNDCYSKLKELVPSIPPNKKVSKMEILQHVIDYILDLQLTLDSHPTLVSLHHHHLSRVGGNTSRTPLTALNTDISILSLQAVELSSEFTDESKSLCP.

One can recognise a bHLH domain in the interval 23-75; the sequence is ARSKAPVDEPMSLLYNMNDCYSKLKELVPSIPPNKKVSKMEILQHVIDYILDL. The Nuclear export signal motif lies at 108–117; it reads LNTDISILSL.

In terms of assembly, heterodimer with other HLH proteins.

It is found in the cytoplasm. The protein resides in the nucleus. Transcriptional regulator (lacking a basic DNA binding domain) which negatively regulates the basic helix-loop-helix (bHLH) transcription factors by forming heterodimers and inhibiting their DNA binding and transcriptional activity. Inhibits the activity of both neurogenic (neurod1/neuroD) and myogenic (myod1/myoD) bHLH factors. May play a role in the regulation of the circadian clock. The protein is DNA-binding protein inhibitor ID-2-B (id2-b) of Xenopus laevis (African clawed frog).